Reading from the N-terminus, the 322-residue chain is Lymphokine-activated killer T-cell-originated protein kinase (322 aa).

At Met1 the chain carries N-acetylmethionine. Phosphothreonine occurs at positions 9 and 24. Ser32 is subject to Phosphoserine. One can recognise a Protein kinase domain in the interval 32–322 (SPFMQKLGFG…HIVEALETDV (291 aa)). 38 to 46 (LGFGTGVNV) contributes to the ATP binding site. Position 59 is a phosphoserine (Ser59). Lys64 contacts ATP. Asp167 functions as the Proton acceptor in the catalytic mechanism. Lys169 participates in a covalent cross-link: Glycyl lysine isopeptide (Lys-Gly) (interchain with G-Cter in SUMO2). Residues 320–322 (TDV) form a PDZ-interaction region.

It belongs to the protein kinase superfamily. STE Ser/Thr protein kinase family. MAP kinase kinase subfamily. In terms of assembly, interacts with DLG1 and TP53. In terms of processing, phosphorylated; in a cell-cycle dependent manner at mitosis. In terms of tissue distribution, expressed in the testis and placenta. In the testis, restrictedly expressed in outer cell layer of seminiferous tubules.

It carries out the reaction L-seryl-[protein] + ATP = O-phospho-L-seryl-[protein] + ADP + H(+). The enzyme catalyses L-threonyl-[protein] + ATP = O-phospho-L-threonyl-[protein] + ADP + H(+). The catalysed reaction is L-tyrosyl-[protein] + ATP = O-phospho-L-tyrosyl-[protein] + ADP + H(+). Activated by phosphorylation. Its function is as follows. Phosphorylates MAP kinase p38. Seems to be active only in mitosis. May also play a role in the activation of lymphoid cells. When phosphorylated, forms a complex with TP53, leading to TP53 destabilization and attenuation of G2/M checkpoint during doxorubicin-induced DNA damage. In Homo sapiens (Human), this protein is Lymphokine-activated killer T-cell-originated protein kinase (PBK).